Here is a 230-residue protein sequence, read N- to C-terminus: MKTLSAGLLALASAASAHYTFPSLIANGVVTGEWEYVRQTENHYSNAPVTDVSSEAIRCYENPGRPAAKTLSVAAGSTVGFTVSPSIYHPGPLQFYMARVPDGQTADSWDGSGQVWFKIFEQGPQIDPSGLTWPSDGLSQVQVTIPSSLPSGDYLLRVEQIGLHSASSVNGAQFYLSCAQLTVTGGGNGNPGPLVSFPGAYSPTDPGLLINIYWPIPTSYELPGPPVWRG.

The first 17 residues, 1 to 17, serve as a signal peptide directing secretion; sequence MKTLSAGLLALASAASA. Cu(2+)-binding residues include His-18 and His-89. Cys-59 and Cys-178 are joined by a disulfide. O2 contacts are provided by His-164 and Gln-173. Tyr-175 contacts Cu(2+).

The protein belongs to the polysaccharide monooxygenase AA9 family. It depends on Cu(2+) as a cofactor.

It localises to the secreted. The enzyme catalyses [(1-&gt;4)-beta-D-glucosyl]n+m + reduced acceptor + O2 = 4-dehydro-beta-D-glucosyl-[(1-&gt;4)-beta-D-glucosyl]n-1 + [(1-&gt;4)-beta-D-glucosyl]m + acceptor + H2O.. In terms of biological role, lytic polysaccharide monooxygenase (LPMO) that depolymerizes crystalline and amorphous polysaccharides via the oxidation of scissile alpha- or beta-(1-4)-glycosidic bonds, yielding primarly C1 oxidation products. Catalysis by LPMOs requires the reduction of the active-site copper from Cu(II) to Cu(I) by a reducing agent and H(2)O(2) or O(2) as a cosubstrate. Active on hemicelluloses, including xylan, glucomannan, and xyloglucan. Preferentially cleaves residual xylan in phosphoric acid-swollen cellulose (PASC). Moreover, when exposed to cellulose-xylan blends, shows a preference for xylan and for releasing oxidized xylooligosaccharides. Has no activity on ivory nut mannan (INM), a linear beta-1,4-linked mannan without substitutions. This is AA9 family lytic polysaccharide monooxygenase H from Malbranchea cinnamomea (Thermophilic fungus).